Consider the following 500-residue polypeptide: NAD(P)H-quinone oxidoreductase chain 4, chloroplastic (500 aa).

15 helical membrane passes run Phe-4 to Leu-24, Tyr-35 to Phe-55, Ile-87 to Val-107, Leu-113 to Ser-130, Leu-134 to Met-154, Phe-167 to Leu-187, Ile-211 to His-231, His-242 to Val-262, Ala-272 to Ala-292, Ile-305 to Asp-325, Gly-330 to Gly-350, Met-364 to Ala-384, Leu-386 to Thr-406, Ile-416 to Met-436, and Phe-463 to Phe-483.

The protein belongs to the complex I subunit 4 family.

It localises to the plastid. Its subcellular location is the chloroplast thylakoid membrane. It carries out the reaction a plastoquinone + NADH + (n+1) H(+)(in) = a plastoquinol + NAD(+) + n H(+)(out). The catalysed reaction is a plastoquinone + NADPH + (n+1) H(+)(in) = a plastoquinol + NADP(+) + n H(+)(out). In Coffea arabica (Arabian coffee), this protein is NAD(P)H-quinone oxidoreductase chain 4, chloroplastic.